A 156-amino-acid polypeptide reads, in one-letter code: ATP synthase subunit b (156 aa).

The chain crosses the membrane as a helical span at residues Ile3–Thr23.

It belongs to the ATPase B chain family. F-type ATPases have 2 components, F(1) - the catalytic core - and F(0) - the membrane proton channel. F(1) has five subunits: alpha(3), beta(3), gamma(1), delta(1), epsilon(1). F(0) has three main subunits: a(1), b(2) and c(10-14). The alpha and beta chains form an alternating ring which encloses part of the gamma chain. F(1) is attached to F(0) by a central stalk formed by the gamma and epsilon chains, while a peripheral stalk is formed by the delta and b chains.

The protein resides in the cell inner membrane. In terms of biological role, f(1)F(0) ATP synthase produces ATP from ADP in the presence of a proton or sodium gradient. F-type ATPases consist of two structural domains, F(1) containing the extramembraneous catalytic core and F(0) containing the membrane proton channel, linked together by a central stalk and a peripheral stalk. During catalysis, ATP synthesis in the catalytic domain of F(1) is coupled via a rotary mechanism of the central stalk subunits to proton translocation. Functionally, component of the F(0) channel, it forms part of the peripheral stalk, linking F(1) to F(0). The protein is ATP synthase subunit b of Xanthomonas campestris pv. campestris (strain 8004).